The primary structure comprises 4171 residues: Cytoplasmic dynein 2 heavy chain 1 (4171 aa).

The segment at M1–E1598 is stem. G115 to N122 is an ATP binding site. Coiled-coil stretches lie at residues A164 to L203, K629 to E693, D829 to L861, E927 to R1048, and S1354 to K1383. AAA regions lie at residues Y1599–G1823, E1883–H2100, V2184–S2432, and R2527–Y2767. ATP-binding positions include G1637 to T1644, G1921 to S1928, G2226 to Q2233, and G2565 to R2572. A stalk region spans residues Q2776–I3064. 3 coiled-coil regions span residues E2790–Q2877, E2999–R3059, and E3308–Q3336. 2 AAA regions span residues A3140–K3367 and L3575–Q3784.

It belongs to the dynein heavy chain family. The cytoplasmic dynein complex 2 is probably composed by a heavy chain che-3 homodimer and a number of light intermediate chains.

The protein localises to the cell projection. It is found in the cilium membrane. Its subcellular location is the cytoplasm. It localises to the cytoskeleton. Functionally, functions as a motor for intraflagellar retrograde transport in chemosensory neurons. Functions in cilia biogenesis. This Caenorhabditis elegans protein is Cytoplasmic dynein 2 heavy chain 1.